The primary structure comprises 671 residues: DNA ligase (671 aa).

Residues 32–36 (DAEYD), 81–82 (SL), and Glu113 contribute to the NAD(+) site. The active-site N6-AMP-lysine intermediate is Lys115. NAD(+) contacts are provided by Arg136, Glu173, Lys290, and Lys314. The Zn(2+) site is built by Cys408, Cys411, Cys426, and Cys432. Positions 593-671 (EIDSPFAGKT…EAEMIRLLDA (79 aa)) constitute a BRCT domain.

Belongs to the NAD-dependent DNA ligase family. LigA subfamily. Mg(2+) serves as cofactor. Mn(2+) is required as a cofactor.

The enzyme catalyses NAD(+) + (deoxyribonucleotide)n-3'-hydroxyl + 5'-phospho-(deoxyribonucleotide)m = (deoxyribonucleotide)n+m + AMP + beta-nicotinamide D-nucleotide.. DNA ligase that catalyzes the formation of phosphodiester linkages between 5'-phosphoryl and 3'-hydroxyl groups in double-stranded DNA using NAD as a coenzyme and as the energy source for the reaction. It is essential for DNA replication and repair of damaged DNA. This Salmonella schwarzengrund (strain CVM19633) protein is DNA ligase.